The chain runs to 96 residues: Citrate lyase acyl carrier protein (96 aa).

Ser-14 carries the post-translational modification O-(phosphoribosyl dephospho-coenzyme A)serine.

This sequence belongs to the CitD family. Oligomer with a subunit composition of (alpha,beta,gamma)6.

It is found in the cytoplasm. Covalent carrier of the coenzyme of citrate lyase. The protein is Citrate lyase acyl carrier protein of Pectobacterium carotovorum subsp. carotovorum (strain PC1).